Reading from the N-terminus, the 241-residue chain is tRNA pseudouridine synthase B (241 aa).

Residue aspartate 45 is the Nucleophile of the active site.

Belongs to the pseudouridine synthase TruB family. Type 1 subfamily.

The enzyme catalyses uridine(55) in tRNA = pseudouridine(55) in tRNA. Its function is as follows. Responsible for synthesis of pseudouridine from uracil-55 in the psi GC loop of transfer RNAs. This is tRNA pseudouridine synthase B from Opitutus terrae (strain DSM 11246 / JCM 15787 / PB90-1).